Consider the following 370-residue polypeptide: Dual-specificity RNA methyltransferase RlmN (370 aa).

Glutamate 93 acts as the Proton acceptor in catalysis. A Radical SAM core domain is found at 99–337 (EEGRGTLCVS…VTTVRKTRGD (239 aa)). Cysteines 106 and 343 form a disulfide. Positions 113, 117, and 120 each coordinate [4Fe-4S] cluster. S-adenosyl-L-methionine contacts are provided by residues 167-168 (GE), serine 199, 221-223 (SLH), and asparagine 300. Cysteine 343 (S-methylcysteine intermediate) is an active-site residue.

It belongs to the radical SAM superfamily. RlmN family. The cofactor is [4Fe-4S] cluster.

Its subcellular location is the cytoplasm. It catalyses the reaction adenosine(2503) in 23S rRNA + 2 reduced [2Fe-2S]-[ferredoxin] + 2 S-adenosyl-L-methionine = 2-methyladenosine(2503) in 23S rRNA + 5'-deoxyadenosine + L-methionine + 2 oxidized [2Fe-2S]-[ferredoxin] + S-adenosyl-L-homocysteine. It carries out the reaction adenosine(37) in tRNA + 2 reduced [2Fe-2S]-[ferredoxin] + 2 S-adenosyl-L-methionine = 2-methyladenosine(37) in tRNA + 5'-deoxyadenosine + L-methionine + 2 oxidized [2Fe-2S]-[ferredoxin] + S-adenosyl-L-homocysteine. In terms of biological role, specifically methylates position 2 of adenine 2503 in 23S rRNA and position 2 of adenine 37 in tRNAs. m2A2503 modification seems to play a crucial role in the proofreading step occurring at the peptidyl transferase center and thus would serve to optimize ribosomal fidelity. In Francisella philomiragia subsp. philomiragia (strain ATCC 25017 / CCUG 19701 / FSC 153 / O#319-036), this protein is Dual-specificity RNA methyltransferase RlmN.